The chain runs to 148 residues: Putative anti-anti-sigma factor Rv2638 (148 aa).

The region spanning 30-141 (LRATTDGSGA…PTVDTALGKG (112 aa)) is the STAS domain.

The protein belongs to the anti-sigma-factor antagonist family. Interacts with unphosphorylated OprA.

The protein is Putative anti-anti-sigma factor Rv2638 of Mycobacterium tuberculosis (strain ATCC 25618 / H37Rv).